Reading from the N-terminus, the 429-residue chain is Uracil permease (429 aa).

The Cytoplasmic segment spans residues 1–13 (MTRRAIGVSERPP). Residues 14-37 (LLQTIPLSLQHLFAMFGATVLVPV) form a helical membrane-spanning segment. Topologically, residues 38–41 (LFHI) are periplasmic. The chain crosses the membrane as a helical span at residues 42–61 (NPATVLLFNGIGTLLYLFIC). The Cytoplasmic portion of the chain corresponds to 62 to 64 (KGK). Residues 65 to 81 (IPAYLGSSFAFISPVLL) traverse the membrane as a discontinuously helical segment. Uracil is bound at residue F73. Topologically, residues 82 to 89 (LLPLGYEV) are periplasmic. Residues 90 to 110 (ALGGFIMCGVLFCLVSFIVKK) form a helical membrane-spanning segment. Over 111 to 122 (AGTGWLDVLFPP) the chain is Cytoplasmic. The helical transmembrane segment at 123–144 (AAMGAIVAVIGLELAGVAAGMA) threads the bilayer. Residues 145-155 (GLLPAEGQTPD) lie on the Periplasmic side of the membrane. A helical membrane pass occupies residues 156 to 171 (SKTIIISITTLAVTVL). Topologically, residues 172–178 (GSVLFRG) are cytoplasmic. A helical transmembrane segment spans residues 179 to 199 (FLAIIPILIGVLVGYALSFAM). Over 200 to 224 (GIVDTTPIINAHWFALPTLYTPRFE) the chain is Periplasmic. Residues 225-248 (WFAILTILPAALVVIAEHVGHLVV) traverse the membrane as a helical segment. E241 contributes to the uracil binding site. The Cytoplasmic segment spans residues 249 to 261 (TANIVKKDLLRDP). Residues 262-281 (GLHRSMFANGLSTVISGFFG) traverse the membrane as a helical segment. The discontinuously helical transmembrane segment at 282–298 (STPNTTYGENIGVMAIT) threads the bilayer. Uracil is bound by residues G289 and E290. The Cytoplasmic portion of the chain corresponds to 299-301 (RVY). A helical membrane pass occupies residues 302–319 (STWVIGGAAIFAILLSCV). The Periplasmic portion of the chain corresponds to 320–332 (GKLAAAIQMIPLP). The helical transmembrane segment at 333–354 (VMGGVSLLLYGVIGASGIRVLI) threads the bilayer. Over 355 to 365 (ESKVDYNKAQN) the chain is Cytoplasmic. Positions 366 to 401 (LILTSVILIIGVSGAKVNIGAAELKGMALATIVGIG) form an intramembrane region, discontinuously helical. The Cytoplasmic segment spans residues 402–429 (LSLIFKLISVLRPEEVVLDAEDADITDK).

Belongs to the nucleobase:cation symporter-2 (NCS2) (TC 2.A.40) family.

Its subcellular location is the cell inner membrane. It catalyses the reaction uracil(in) + H(+)(in) = uracil(out) + H(+)(out). In terms of biological role, transport of uracil in the cell. This Escherichia coli O157:H7 protein is Uracil permease (uraA).